Here is a 402-residue protein sequence, read N- to C-terminus: Ferredoxin--NADP reductase (402 aa).

The CpcD-like domain maps to 18–74 (NRLFIYEVVGLGGDGRNENSLVRKSGTTFITVPYARMNQEMQRITKLGGKIVSIRPA). The segment at 80-101 (IVSEGQSSAQASAQSPMASSTK) is disordered. A compositionally biased stretch (low complexity) spans 85 to 99 (QSSAQASAQSPMASS). An FAD-binding FR-type domain is found at 120–245 (KTPFLGKCIE…TGPVGKEMLL (126 aa)). FAD contacts are provided by residues 179–182 (RLYS), 200–202 (CVR), Tyr206, 218–220 (VCS), and Thr260. 2 residues coordinate NADP(+): Ser182 and Arg202. NADP(+) contacts are provided by residues Thr260, 292-293 (VP), 322-323 (SR), Lys332, 332-336 (KVYVQ), 361-362 (GL), and Glu400.

Belongs to the ferredoxin--NADP reductase type 1 family. It depends on FAD as a cofactor.

It localises to the cellular thylakoid membrane. The enzyme catalyses 2 reduced [2Fe-2S]-[ferredoxin] + NADP(+) + H(+) = 2 oxidized [2Fe-2S]-[ferredoxin] + NADPH. In Picosynechococcus sp. (strain ATCC 27264 / PCC 7002 / PR-6) (Agmenellum quadruplicatum), this protein is Ferredoxin--NADP reductase (petH).